Reading from the N-terminus, the 147-residue chain is Protein SprT-like (147 aa).

Residues 5-142 enclose the SprT-like domain; it reads DYVNEVSLED…SFCRGHLKEI (138 aa). His-64 serves as a coordination point for Zn(2+). Glu-65 is a catalytic residue. His-68 provides a ligand contact to Zn(2+).

It belongs to the SprT family. Requires Zn(2+) as cofactor.

Its subcellular location is the cytoplasm. This chain is Protein SprT-like, found in Streptococcus uberis (strain ATCC BAA-854 / 0140J).